The chain runs to 388 residues: MRALHFGAGNIGRGFIARVLLKSDFNLIFSDVDQNIINAINNYKKYKIKLIDNSFEKIININNISAINSYDPNVLNVISHVDLITTAAGVNALYKIASILIEGIILRINLKCKKPLNIIACENKIKATSFLKKIIFDKIPLKYHDYFDEYIGFVDCTIDTIVPTFSSFKEENSLFVIAENFKEWIVDVNQFKGMVPKIIDMTLSDNLTSFIDRKILTLNTGHAIAAYLGLMKNYKNICEAMSDFSIQRIVKDAMYESGLVLIKRYNFNKKDHLSYIDKIFVRFKNPFILDKLERIARNPLQKLSKDERLIQPFVEAMKYNLPYFNLVKGIAAALHYRNINDIQSIKLSSLIKEEGLEETLVKVCKLNANSNEIRIIISEYHSIIKDFL.

Position 3-14 (3-14) interacts with NAD(+); it reads ALHFGAGNIGRG.

This sequence belongs to the mannitol dehydrogenase family.

The enzyme catalyses D-mannitol 1-phosphate + NAD(+) = beta-D-fructose 6-phosphate + NADH + H(+). The sequence is that of Mannitol-1-phosphate 5-dehydrogenase from Buchnera aphidicola subsp. Schizaphis graminum (strain Sg).